A 167-amino-acid polypeptide reads, in one-letter code: Glutathione peroxidase-like peroxiredoxin 1 (167 aa).

Residue C36 is the Cysteine sulfenic acid (-SOH) intermediate of the active site. C36 and C82 are joined by a disulfide.

It belongs to the glutathione peroxidase family. Monomer.

The protein resides in the peroxisome matrix. Its subcellular location is the mitochondrion outer membrane. It catalyses the reaction 2 glutathione + H2O2 = glutathione disulfide + 2 H2O. The catalysed reaction is a hydroperoxide + [thioredoxin]-dithiol = an alcohol + [thioredoxin]-disulfide + H2O. In terms of biological role, glutathione peroxidase-like protein that protects cells from phospholipid hydroperoxides and nonphospholipid peroxides during oxidative stress. Has peroxidase activity using thioredoxin or glutathione as a reducing power. Involved in peroxisome formation. This is Glutathione peroxidase-like peroxiredoxin 1 from Saccharomyces cerevisiae (strain ATCC 204508 / S288c) (Baker's yeast).